A 527-amino-acid polypeptide reads, in one-letter code: MESAAALHFSRPASLLLLLLSLCALVSAQFIVVGPTDPILATVGENTTLRCHLSPEKNAEDMEVRWFRSQFSPAVFVYKGGRERTEEQMEEYRGRTTFVSKDISRGSVALVIHNITAQENGTYRCYFQEGRSYDEAILHLVVAGLGSKPLISMRGHEDGGIRLECISRGWYPKPLTVWRDPYGGVAPALKEVSMPDADGLFMVTTAVIIRDKSVRNMSCSINNTLLGQKKESVIFIPESFMPSVSPCAVALPIIVVILMIPIAVCIYWINKLQKEKKILSGEKEFERETREIALKELEKERVQKEEELQVKEKLQEELRWRRTFLHAVDVVLDPDTAHPDLFLSEDRRSVRRCPFRHLGESVPDNPERFDSQPCVLGRESFASGKHYWEVEVENVIEWTVGVCRDSVERKGEVLLIPQNGFWTLEMHKGQYRAVSSPDRILPLKESLCRVGVFLDYEAGDVSFYNMRDRSHIYTCPRSAFSVPVRPFFRLGCEDSPIFICPALTGANGVTVPEEGLTLHRVGTHQSL.

A signal peptide spans 1-28 (MESAAALHFSRPASLLLLLLSLCALVSA). The Ig-like V-type domain occupies 29–141 (QFIVVGPTDP…SYDEAILHLV (113 aa)). Residues 29 to 248 (QFIVVGPTDP…SFMPSVSPCA (220 aa)) lie on the Extracellular side of the membrane. Asn46, Asn114, and Asn120 each carry an N-linked (GlcNAc...) asparagine glycan. The cysteines at positions 51 and 125 are disulfide-linked. Residues 249–269 (VALPIIVVILMIPIAVCIYWI) traverse the membrane as a helical segment. At 270–527 (NKLQKEKKIL…LHRVGTHQSL (258 aa)) the chain is on the cytoplasmic side. The B30.2/SPRY domain occupies 310–506 (VKEKLQEELR…IFICPALTGA (197 aa)).

Belongs to the immunoglobulin superfamily. BTN/MOG family. As to expression, highly expressed in brain, bone marrow, small intestine, muscle, spleen and pancreas. Moderate expression was seen in lung, liver and kidney.

It localises to the membrane. The polypeptide is Butyrophilin subfamily 2 member A1 (BTN2A1) (Homo sapiens (Human)).